Consider the following 539-residue polypeptide: Prolyl 4-hydroxylase subunit alpha-2 (539 aa).

Positions 1–16 are cleaved as a signal peptide; it reads MRAVLLVCLLAGLAHA. The N-linked (GlcNAc...) asparagine glycan is linked to Asn-110. A Fe2OG dioxygenase domain is found at 401–509; that stretch reads TSEELQVANY…KWVSNKWIHE (109 aa). Fe cation contacts are provided by His-419, Asp-421, and His-490. Lys-500 lines the 2-oxoglutarate pocket.

This sequence belongs to the P4HA family. Heterotetramer of two alpha chains and two beta chains. Exist either as a phy-2(2)/pdi-2(2) tetramer or as a phy-1/phy-2/pdi-2(2) tetramer. Requires Fe(2+) as cofactor. The cofactor is L-ascorbate.

The protein localises to the endoplasmic reticulum lumen. The catalysed reaction is L-prolyl-[collagen] + 2-oxoglutarate + O2 = trans-4-hydroxy-L-prolyl-[collagen] + succinate + CO2. Functionally, catalyzes the post-translational formation of 4-hydroxyproline in -Xaa-Pro-Gly- sequences in collagens and other proteins. The sequence is that of Prolyl 4-hydroxylase subunit alpha-2 (phy-2) from Caenorhabditis elegans.